A 359-amino-acid chain; its full sequence is N-acetyl-gamma-glutamyl-phosphate reductase (359 aa).

Cys-162 is a catalytic residue.

The protein belongs to the NAGSA dehydrogenase family. Type 1 subfamily.

The protein localises to the cytoplasm. The enzyme catalyses N-acetyl-L-glutamate 5-semialdehyde + phosphate + NADP(+) = N-acetyl-L-glutamyl 5-phosphate + NADPH + H(+). Its pathway is amino-acid biosynthesis; L-arginine biosynthesis; N(2)-acetyl-L-ornithine from L-glutamate: step 3/4. Its function is as follows. Catalyzes the NADPH-dependent reduction of N-acetyl-5-glutamyl phosphate to yield N-acetyl-L-glutamate 5-semialdehyde. In Prochlorococcus marinus (strain SARG / CCMP1375 / SS120), this protein is N-acetyl-gamma-glutamyl-phosphate reductase.